A 406-amino-acid chain; its full sequence is Tryptophan synthase beta chain (406 aa).

N6-(pyridoxal phosphate)lysine is present on K99.

Belongs to the TrpB family. In terms of assembly, tetramer of two alpha and two beta chains. The cofactor is pyridoxal 5'-phosphate.

It catalyses the reaction (1S,2R)-1-C-(indol-3-yl)glycerol 3-phosphate + L-serine = D-glyceraldehyde 3-phosphate + L-tryptophan + H2O. The protein operates within amino-acid biosynthesis; L-tryptophan biosynthesis; L-tryptophan from chorismate: step 5/5. The beta subunit is responsible for the synthesis of L-tryptophan from indole and L-serine. This Rhizobium meliloti (strain 1021) (Ensifer meliloti) protein is Tryptophan synthase beta chain.